A 322-amino-acid chain; its full sequence is Putative nickel/cobalt efflux system HI_1248 (322 aa).

6 consecutive transmembrane segments (helical) span residues 7 to 27 (GLVL…WFFL), 54 to 74 (AGTT…LGPG), 100 to 120 (LSSL…VVVL), 137 to 157 (TALL…LRAY), 228 to 248 (IFVL…LAVL), and 294 to 314 (LIAG…TTIS).

Belongs to the NiCoT transporter (TC 2.A.52) family.

It localises to the cell membrane. In terms of biological role, efflux system for nickel and cobalt. The polypeptide is Putative nickel/cobalt efflux system HI_1248 (Haemophilus influenzae (strain ATCC 51907 / DSM 11121 / KW20 / Rd)).